The chain runs to 1058 residues: Carbamoyl phosphate synthase large chain (1058 aa).

The segment at 1–401 is carboxyphosphate synthetic domain; the sequence is MPKRTDIQKI…SLLKACRSLE (401 aa). ATP is bound by residues R129, R169, G175, G176, R208, I210, E215, G241, I242, H243, Q284, and E298. Residues 133-327 enclose the ATP-grasp 1 domain; sequence KQLMEELEQP…IAKLAAKIAV (195 aa). Q284, E298, and N300 together coordinate Mg(2+). The Mn(2+) site is built by Q284, E298, and N300. Residues 402-546 form an oligomerization domain region; it reads IGVHHNEIPE…YSTYGWENES (145 aa). Residues 547 to 929 form a carbamoyl phosphate synthetic domain region; the sequence is IRSDKESVLV…ALYKAFEASY (383 aa). The 191-residue stretch at 671–861 folds into the ATP-grasp 2 domain; that stretch reads EQALKELDIP…MAQVATKLIL (191 aa). ATP contacts are provided by R707, S746, I748, E752, G777, V778, H779, S780, Q820, and E832. The Mg(2+) site is built by Q820, E832, and N834. 3 residues coordinate Mn(2+): Q820, E832, and N834. Residues 930–1058 enclose the MGS-like domain; the sequence is LHLPTFGNVV…ESRSFVTEAI (129 aa). The tract at residues 930–1058 is allosteric domain; it reads LHLPTFGNVV…ESRSFVTEAI (129 aa).

It belongs to the CarB family. Composed of two chains; the small (or glutamine) chain promotes the hydrolysis of glutamine to ammonia, which is used by the large (or ammonia) chain to synthesize carbamoyl phosphate. Tetramer of heterodimers (alpha,beta)4. Mg(2+) serves as cofactor. Requires Mn(2+) as cofactor.

The enzyme catalyses hydrogencarbonate + L-glutamine + 2 ATP + H2O = carbamoyl phosphate + L-glutamate + 2 ADP + phosphate + 2 H(+). It carries out the reaction hydrogencarbonate + NH4(+) + 2 ATP = carbamoyl phosphate + 2 ADP + phosphate + 2 H(+). It functions in the pathway amino-acid biosynthesis; L-arginine biosynthesis; carbamoyl phosphate from bicarbonate: step 1/1. Its pathway is pyrimidine metabolism; UMP biosynthesis via de novo pathway; (S)-dihydroorotate from bicarbonate: step 1/3. Functionally, large subunit of the glutamine-dependent carbamoyl phosphate synthetase (CPSase). CPSase catalyzes the formation of carbamoyl phosphate from the ammonia moiety of glutamine, carbonate, and phosphate donated by ATP, constituting the first step of 2 biosynthetic pathways, one leading to arginine and/or urea and the other to pyrimidine nucleotides. The large subunit (synthetase) binds the substrates ammonia (free or transferred from glutamine from the small subunit), hydrogencarbonate and ATP and carries out an ATP-coupled ligase reaction, activating hydrogencarbonate by forming carboxy phosphate which reacts with ammonia to form carbamoyl phosphate. The chain is Carbamoyl phosphate synthase large chain from Streptococcus pneumoniae serotype 2 (strain D39 / NCTC 7466).